The primary structure comprises 766 residues: Serine/threonine-protein kinase PKH1 (766 aa).

Residues 1–52 (MGNRSLTEADHALLSKPLVPTSAEHTQTQEYPRPFVDGSNSQSGSELQASPQ) form a disordered region. Polar residues predominate over residues 38 to 52 (GSNSQSGSELQASPQ). The Protein kinase domain occupies 125–391 (FKFGEQLGDG…IKQIKAHLFF (267 aa)). Residues 135–137 (SYS) and K154 contribute to the ATP site. Residues 156-201 (LSKEYLIRQKKVKYVTVEKLALQKLNGTKGIFKLFFTFQDEASLYF) form a PIF-pocket region. Residues 204–206 (EYA) and D210 contribute to the ATP site. The Proton acceptor role is filled by D249. Residues E253 and D267 each coordinate ATP. S294 and S296 each carry phosphoserine. Positions 476-495 (TSQPKLGSKSSTSVRSASNN) are enriched in polar residues. Disordered stretches follow at residues 476–529 (TSQP…NRSR) and 725–745 (PEEG…SSSN). A compositionally biased stretch (low complexity) spans 511–521 (SVSSPSISTTS). The segment covering 735–745 (PTSLQTRSSSN) has biased composition (polar residues).

Belongs to the protein kinase superfamily. AGC Ser/Thr protein kinase family. PDPK1 subfamily.

It carries out the reaction L-seryl-[protein] + ATP = O-phospho-L-seryl-[protein] + ADP + H(+). The catalysed reaction is L-threonyl-[protein] + ATP = O-phospho-L-threonyl-[protein] + ADP + H(+). In terms of biological role, activates YPK1 by phosphorylating of a threonine residue. The sequence is that of Serine/threonine-protein kinase PKH1 (PKH1) from Saccharomyces cerevisiae (strain ATCC 204508 / S288c) (Baker's yeast).